A 199-amino-acid chain; its full sequence is LPICPSGAVNCQVSLRDLFDRAVILSHYIHNLSSEMFNEFDKRYAQGRGFITKAIDSCHTSSLQTPEDKEQAQQIHHEVLVSLILGVLRSWNDPLYHLVTEVRGMQEAPDAILSRAIQIEEENKRLLEGMEKIVGQVHPGVKENEVYSVWSGLPSLQMADEDTRLFAFYDLLHCLRRDSHKIDSYLKLLKCRIIYNSNC.

An intrachain disulfide couples Cys-4 to Cys-11. Ser-26, Ser-34, and Ser-90 each carry phosphoserine. 2 disulfide bridges follow: Cys-58–Cys-174 and Cys-191–Cys-199.

It belongs to the somatotropin/prolactin family. As to quaternary structure, interacts with PRLR.

It localises to the secreted. Its function is as follows. Prolactin acts primarily on the mammary gland by promoting lactation. The polypeptide is Prolactin (PRL) (Balaenoptera borealis (Sei whale)).